The sequence spans 312 residues: Large ribosomal subunit protein uL15m (312 aa).

The interval 63–89 (RIRKGRGPSSGYGKTAGRGTKGQKAHG) is disordered. Residues 70–82 (PSSGYGKTAGRGT) show a composition bias toward gly residues.

The protein belongs to the universal ribosomal protein uL15 family. As to quaternary structure, component of the mitochondrial large ribosomal subunit (mt-LSU). Mature N.crassa 74S mitochondrial ribosomes consist of a small (37S) and a large (54S) subunit. The 37S small subunit contains a 16S ribosomal RNA (16S mt-rRNA) and 32 different proteins. The 54S large subunit contains a 23S rRNA (23S mt-rRNA) and 42 different proteins.

The protein localises to the mitochondrion. Component of the mitochondrial ribosome (mitoribosome), a dedicated translation machinery responsible for the synthesis of mitochondrial genome-encoded proteins, including at least some of the essential transmembrane subunits of the mitochondrial respiratory chain. The mitoribosomes are attached to the mitochondrial inner membrane and translation products are cotranslationally integrated into the membrane. The polypeptide is Large ribosomal subunit protein uL15m (mrpl10) (Neurospora crassa (strain ATCC 24698 / 74-OR23-1A / CBS 708.71 / DSM 1257 / FGSC 987)).